Reading from the N-terminus, the 320-residue chain is uncharacterized protein (320 aa).

Residues 1–23 (MKLNLRFPSYFLPVVAASAFLVS) form the signal peptide. The N-palmitoyl cysteine moiety is linked to residue Cys24. Cys24 is lipidated: S-diacylglycerol cysteine. The disordered stretch occupies residues 160–181 (KNHEHGHTHKNGETHEHDHDHH).

It localises to the cell membrane. This is an uncharacterized protein from Mycoplasma pneumoniae (strain ATCC 29342 / M129 / Subtype 1) (Mycoplasmoides pneumoniae).